Reading from the N-terminus, the 491-residue chain is MPGARDALCHQALQLLAELCARGALEHDSCQDFIYHLRDRARPRLRDPDISVSLLTLVVTACGLALFGVSLFVSWKLCWVPWRERGLPSGSKDNNQEPLNYMDTETNEQENSEDFLDPPTPCPDSSMKISHTSPDIPLSTQTGIQENCAHGVRVQRQVTEPTSSARHNSIRRQLNLSNPDFNIQQLQKQEQLTGIGRIKPELYKQRSLDNDDGRRSNSKACGKLNFILKYDCDLEQLIVKIHKAVNLPAKDFSGTSDPYVKIYLLPDRKTKHQTKVHRKTLNPVFDEVFLFPVPYNDLEARKLHFSVYDFDRFSRHDLIGQVVVDHFLDLADFPRECILWKDIEYVTNDNVDLGELMFSLCYLPTAGRLTITIIKARNLKAMDITGASDPYVKVSLMCDGRRLKKRKTSTKRNTLNPVYNEAIVFDVPPENIDQIHLSIAVMDYDRVGHNEIIGVCQVGNEAERLGRDHWSEMLSYPRKPIAHWHSLVEKR.

Topologically, residues 1 to 52 (MPGARDALCHQALQLLAELCARGALEHDSCQDFIYHLRDRARPRLRDPDISV) are vesicular. The tract at residues 9–31 (CHQALQLLAELCARGALEHDSCQ) is cysteine motif. Residues 53–73 (SLLTLVVTACGLALFGVSLFV) form a helical membrane-spanning segment. Residues 74 to 491 (SWKLCWVPWR…AHWHSLVEKR (418 aa)) lie on the Cytoplasmic side of the membrane. Ser177 bears the Phosphoserine mark. 2 C2 domains span residues 220–341 (ACGK…ILWK) and 352–485 (DLGE…AHWH). 11 residues coordinate Ca(2+): Asp251, Asp257, Asp309, Phe310, Asp311, Ser314, Asp317, Asp383, Asp389, Asp443, and Asp445.

It belongs to the synaptotagmin family. Homodimer; disulfide-linked via the cysteine motif. Can also form heterodimers with SYT3, SYT6, SYT7 and SYT10. It depends on Ca(2+) as a cofactor.

The protein resides in the cytoplasmic vesicle. The protein localises to the secretory vesicle. It localises to the synaptic vesicle membrane. Its function is as follows. May be involved in Ca(2+)-dependent exocytosis of secretory vesicles through Ca(2+) and phospholipid binding to the C2 domain or may serve as Ca(2+) sensors in the process of vesicular trafficking and exocytosis. This is Synaptotagmin-9 (SYT9) from Homo sapiens (Human).